The chain runs to 135 residues: Small ribosomal subunit protein bS6 (135 aa).

The segment covering 99 to 120 has biased composition (polar residues); the sequence is QHSSLGRSTAPANPMASNTPRT. Residues 99-135 are disordered; the sequence is QHSSLGRSTAPANPMASNTPRTEGQEQAKTEPQTAPA.

The protein belongs to the bacterial ribosomal protein bS6 family.

In terms of biological role, binds together with bS18 to 16S ribosomal RNA. The polypeptide is Small ribosomal subunit protein bS6 (Synechococcus sp. (strain RCC307)).